Reading from the N-terminus, the 418-residue chain is Trans-acting enoyl reductase (418 aa).

Belongs to the saccharopine dehydrogenase family. Enoyl reductase subfamily.

In terms of biological role, involved in the reduction of the double bond between C-4 and C-5 during phthiocerol dimycocerosates (DIM A) and glycosylated phenolphthiocerol dimycocerosates (PGL) biosynthesis. This is Trans-acting enoyl reductase from Mycobacterium leprae (strain TN).